Reading from the N-terminus, the 292-residue chain is Claudin-23 (292 aa).

The Cytoplasmic segment spans residues 1 to 3; it reads MRT. The chain crosses the membrane as a helical span at residues 4–24; that stretch reads PVVMTLGMVLAPCGLLLNLTG. Over 25 to 81 the chain is Extracellular; it reads TLAPGWRLVKGFLNQPVDVELYQGLWDMCREQSSRERECGQTDQWGYFEAQPVLVAR. The chain crosses the membrane as a helical span at residues 82–102; the sequence is ALMVTSLAATVLGLLLASLGV. Over 103–110 the chain is Cytoplasmic; sequence RCWQDEPN. A helical transmembrane segment spans residues 111–131; that stretch reads FVLAGLSGVVLFVAGLLGLIP. Over 132-160 the chain is Extracellular; it reads VSWYNHFLGDRDVLPAPASPVTVQVSYSL. Residues 161–181 traverse the membrane as a helical segment; the sequence is VLGYLGSCLLLLGGFSLALSF. Residues 182–292 lie on the Cytoplasmic side of the membrane; that stretch reads APWCDERCRR…DSSLPCDSDL (111 aa). The tract at residues 222-292 is disordered; sequence KYYSDGQHRP…DSSLPCDSDL (71 aa). Residues 273 to 282 show a composition bias toward polar residues; that stretch reads DAPSCSTHPC.

This sequence belongs to the claudin family. In terms of tissue distribution, expressed in germinal center B-cells, placenta, stomach as well as in colon tumor.

Its subcellular location is the cell junction. It localises to the tight junction. The protein resides in the cell membrane. Functionally, plays a major role in tight junction-specific obliteration of the intercellular space, through calcium-independent cell-adhesion activity. The polypeptide is Claudin-23 (CLDN23) (Homo sapiens (Human)).